The primary structure comprises 116 residues: Somatostatin (116 aa).

The signal sequence occupies residues 1–24; that stretch reads MLSCRLQCALAALCIVLALGGVTG. Residues 35–88 constitute a propeptide that is removed on maturation; it reads LQKSLAAATGKQELAKYFLAELLSEPNQTENDALEPEDLPQAAEQDEMRLELQR. Threonine 43 bears the Threonine amide mark. The cysteines at positions 105 and 116 are disulfide-linked.

The protein belongs to the somatostatin family. C-terminal amidation of the neuronostatin peptide is required for its biological activity, including for the regulation of mean arterial pressure. In terms of tissue distribution, in the pancreas, somatostatin is expressed in delta cells of the islets of Langerhans. In the stomach, it is expressed in parietal cells of oxyntic mucosa and in the small intestine, it is found in the villus (at protein level). Neuronostatin is expressed in the pancreas in delta cells of the islets of Langerhans, as well as in the stomach, in parietal cells of oxyntic mucosa and in the small intestine, in the villus (at protein level).

The protein resides in the secreted. In terms of biological role, inhibits the secretion of pituitary hormones, including that of growth hormone/somatotropin (GH1), PRL, ACTH, luteinizing hormone (LH) and TSH. Also impairs ghrelin- and GnRH-stimulated secretion of GH1 and LH; the inhibition of ghrelin-stimulated secretion of GH1 can be further increased by neuronostatin. May enhance low-glucose-induced glucagon release by pancreatic alpha cells. This effect may be mediated by binding to GPR107 and PKA activation. May regulate cardiac contractile function. May compromise cardiomyocyte viability. In the central nervous system, may impair memory retention and may affect hippocampal excitability. May also have anxiolytic and anorexigenic effects. May play a role in arterial pressure regulation. May inhibit basal, but not ghrelin- or GnRH-stimulated secretion of GH1 or LH, but does not affect the release of other pituitary hormones, including PRL, ACTH, FSH or TSH. Potentiates inhibitory action of somatostatin on ghrelin-stimulated secretion of GH1, but not that on GnRH-stimulated secretion of LH. The polypeptide is Somatostatin (Sst) (Mus musculus (Mouse)).